Consider the following 652-residue polypeptide: DNA ligase (652 aa).

Residues 29–33 (DAEYD), 78–79 (SL), and Glu-107 each bind NAD(+). Lys-109 acts as the N6-AMP-lysine intermediate in catalysis. Positions 130, 164, 278, and 302 each coordinate NAD(+). Residues Cys-395, Cys-398, Cys-413, and Cys-418 each coordinate Zn(2+). The region spanning 577–652 (DENAALSGMT…IKDEAWLESL (76 aa)) is the BRCT domain.

It belongs to the NAD-dependent DNA ligase family. LigA subfamily. The cofactor is Mg(2+). It depends on Mn(2+) as a cofactor.

It catalyses the reaction NAD(+) + (deoxyribonucleotide)n-3'-hydroxyl + 5'-phospho-(deoxyribonucleotide)m = (deoxyribonucleotide)n+m + AMP + beta-nicotinamide D-nucleotide.. Functionally, DNA ligase that catalyzes the formation of phosphodiester linkages between 5'-phosphoryl and 3'-hydroxyl groups in double-stranded DNA using NAD as a coenzyme and as the energy source for the reaction. It is essential for DNA replication and repair of damaged DNA. The sequence is that of DNA ligase from Streptococcus suis (strain 05ZYH33).